A 282-amino-acid polypeptide reads, in one-letter code: Insulin-like growth factor-binding protein 7 (282 aa).

The first 26 residues, 1–26, serve as a signal peptide directing secretion; that stretch reads MERPSLRALLLGAAGLLLLLLPLSSS. The 87-residue stretch at 28-114 folds into the IGFBP N-terminal domain; sequence SSDTCGPCEP…PGVSGVCVCK (87 aa). 7 cysteine pairs are disulfide-bonded: C32/C57, C35/C59, C40/C60, C48/C63, C71/C87, C81/C111, and C120/C156. Residues 105–158 form the Kazal-like domain; it reads PGVSGVCVCKSRYPVCGSDGTTYPSGCQLRAASQRAESRGEKAITQVSKGTCEQ. The Ig-like C2-type domain maps to 160–264; it reads PSIVTPPKDI…GQASASAKIT (105 aa). A glycan (N-linked (GlcNAc...) asparagine) is linked at N171. A disulfide bridge links C181 with C248. S239 carries the phosphoserine; by FAM20C modification.

May interact with VPS24/CHMP3; the relevance of such interaction however remains unclear. Interacts with CD93; this interaction plays a role in endothelial cells angiogenesis. N-glycosylated.

The protein resides in the secreted. In terms of biological role, binds IGF1 and IGF2 with a relatively low affinity. Stimulates prostacyclin (PGI2) production. Stimulates cell adhesion. Acts as a ligand for CD93 to play a role in angiogenesis. In Homo sapiens (Human), this protein is Insulin-like growth factor-binding protein 7 (IGFBP7).